Consider the following 267-residue polypeptide: tRNA pseudouridine synthase A (267 aa).

Catalysis depends on aspartate 51, which acts as the Nucleophile. Tyrosine 109 lines the substrate pocket.

This sequence belongs to the tRNA pseudouridine synthase TruA family. As to quaternary structure, homodimer.

The enzyme catalyses uridine(38/39/40) in tRNA = pseudouridine(38/39/40) in tRNA. Its function is as follows. Formation of pseudouridine at positions 38, 39 and 40 in the anticodon stem and loop of transfer RNAs. In Staphylococcus carnosus (strain TM300), this protein is tRNA pseudouridine synthase A.